We begin with the raw amino-acid sequence, 88 residues long: Small ribosomal subunit protein uS17 (88 aa).

This sequence belongs to the universal ribosomal protein uS17 family. As to quaternary structure, part of the 30S ribosomal subunit.

Functionally, one of the primary rRNA binding proteins, it binds specifically to the 5'-end of 16S ribosomal RNA. This Pseudomonas savastanoi pv. phaseolicola (strain 1448A / Race 6) (Pseudomonas syringae pv. phaseolicola (strain 1448A / Race 6)) protein is Small ribosomal subunit protein uS17.